A 367-amino-acid chain; its full sequence is MLLALAQWLAQDVRFFNVFNYITLRAVLAAMTALLLSLAAGPAVIRWLAAKKIGQAVRNDGPQTHLVKSGTPTMGGVLILIAIGITTLLWGDLTNKYVWTVLVVTLGYGIVGWYDDWKKVVYRDPNGLASRWKFFWQSVLGIGAALFIAFSAKSPAQTELIIPFFKTMAYPLGVIGFITLTYFVIVGTSNAVNLTDGLDGLAIMPTVMIAAAFALIAYVTGHAVYAKYLLIPYVPGAGELCIFLGAIAGAGLGFLWFNAYPAEVFMGDVGALALGAALGTVAVIVRQEIVLLIMGGVFVIETLSVMLQVGYFKYTKRKYGEGRRILRMAPLHHHFEQTGWKETQVVVRFWIITIMLVLIGLSTLKLR.

10 helical membrane passes run 27-47 (VLAA…VIRW), 73-93 (TMGG…WGDL), 97-117 (YVWT…YDDW), 132-152 (WKFF…AFSA), 167-187 (TMAY…VIVG), 200-220 (GLAI…AYVT), 237-257 (AGEL…FLWF), 264-284 (VFMG…VAVI), 289-309 (IVLL…MLQV), and 344-364 (QVVV…LSTL).

This sequence belongs to the glycosyltransferase 4 family. MraY subfamily. Mg(2+) serves as cofactor.

It localises to the cell inner membrane. It carries out the reaction UDP-N-acetyl-alpha-D-muramoyl-L-alanyl-gamma-D-glutamyl-meso-2,6-diaminopimeloyl-D-alanyl-D-alanine + di-trans,octa-cis-undecaprenyl phosphate = di-trans,octa-cis-undecaprenyl diphospho-N-acetyl-alpha-D-muramoyl-L-alanyl-D-glutamyl-meso-2,6-diaminopimeloyl-D-alanyl-D-alanine + UMP. Its pathway is cell wall biogenesis; peptidoglycan biosynthesis. Its function is as follows. Catalyzes the initial step of the lipid cycle reactions in the biosynthesis of the cell wall peptidoglycan: transfers peptidoglycan precursor phospho-MurNAc-pentapeptide from UDP-MurNAc-pentapeptide onto the lipid carrier undecaprenyl phosphate, yielding undecaprenyl-pyrophosphoryl-MurNAc-pentapeptide, known as lipid I. This is Phospho-N-acetylmuramoyl-pentapeptide-transferase from Dechloromonas aromatica (strain RCB).